The sequence spans 111 residues: Putative carnobacteriocin-B2 immunity protein (111 aa).

Its function is as follows. Could impart immunity to carnobacteriocin-B2 to naturally sensitive host strains. The chain is Putative carnobacteriocin-B2 immunity protein from Carnobacterium maltaromaticum (Carnobacterium piscicola).